A 779-amino-acid chain; its full sequence is Phosphoribosylformylglycinamidine synthase subunit PurL (779 aa).

Residue H52 is part of the active site. ATP-binding residues include Y55 and K94. E96 is a Mg(2+) binding site. Residues 97–100 (SHNH) and R119 contribute to the substrate site. H98 (proton acceptor) is an active-site residue. A Mg(2+)-binding site is contributed by D120. Q243 is a binding site for substrate. D271 provides a ligand contact to Mg(2+). A substrate-binding site is contributed by 315–317 (ESQ). ATP-binding residues include N523 and G560. Mg(2+) is bound at residue N561. Substrate is bound at residue S563.

Belongs to the FGAMS family. As to quaternary structure, monomer. Part of the FGAM synthase complex composed of 1 PurL, 1 PurQ and 2 PurS subunits.

Its subcellular location is the cytoplasm. The enzyme catalyses N(2)-formyl-N(1)-(5-phospho-beta-D-ribosyl)glycinamide + L-glutamine + ATP + H2O = 2-formamido-N(1)-(5-O-phospho-beta-D-ribosyl)acetamidine + L-glutamate + ADP + phosphate + H(+). It functions in the pathway purine metabolism; IMP biosynthesis via de novo pathway; 5-amino-1-(5-phospho-D-ribosyl)imidazole from N(2)-formyl-N(1)-(5-phospho-D-ribosyl)glycinamide: step 1/2. In terms of biological role, part of the phosphoribosylformylglycinamidine synthase complex involved in the purines biosynthetic pathway. Catalyzes the ATP-dependent conversion of formylglycinamide ribonucleotide (FGAR) and glutamine to yield formylglycinamidine ribonucleotide (FGAM) and glutamate. The FGAM synthase complex is composed of three subunits. PurQ produces an ammonia molecule by converting glutamine to glutamate. PurL transfers the ammonia molecule to FGAR to form FGAM in an ATP-dependent manner. PurS interacts with PurQ and PurL and is thought to assist in the transfer of the ammonia molecule from PurQ to PurL. The protein is Phosphoribosylformylglycinamidine synthase subunit PurL of Prochlorococcus marinus (strain MIT 9215).